The following is a 101-amino-acid chain: Interleukin-8 (101 aa).

Residues methionine 1–alanine 22 form the signal peptide. At arginine 27 the chain carries Citrulline. 2 cysteine pairs are disulfide-bonded: cysteine 34/cysteine 61 and cysteine 36/cysteine 77.

It belongs to the intercrine alpha (chemokine CxC) family. As to quaternary structure, homodimer. Interacts with TNFAIP6 (via Link domain); this interaction interferes with chemokine binding to glycosaminoglycans. In terms of processing, citrullination at Arg-27 prevents proteolysis, and dampens tissue inflammation, it also enhances leukocytosis, possibly through impaired chemokine clearance from the blood circulation.

It localises to the secreted. Its function is as follows. Chemotactic factor that mediates inflammatory response by attracting neutrophils, basophils, and T-cells to clear pathogens and protect the host from infection. Also plays an important role in neutrophil activation. Released in response to an inflammatory stimulus, exerts its effect by binding to the G-protein-coupled receptors CXCR1 and CXCR2, primarily found in neutrophils, monocytes and endothelial cells. G-protein heterotrimer (alpha, beta, gamma subunits) constitutively binds to CXCR1/CXCR2 receptor and activation by IL8 leads to beta and gamma subunits release from Galpha (GNAI2 in neutrophils) and activation of several downstream signaling pathways including PI3K and MAPK pathways. This Felis catus (Cat) protein is Interleukin-8 (CXCL8).